Reading from the N-terminus, the 340-residue chain is Mitochondrial calcium uniporter regulator 1 (340 aa).

The disordered stretch occupies residues 1–44; it reads MDSGSVAAERPRRTPSRQRLPSSGCGVPARPGVSTLPGGRSWLR. Residues 1-54 lie on the Mitochondrial intermembrane side of the membrane; the sequence is MDSGSVAAERPRRTPSRQRLPSSGCGVPARPGVSTLPGGRSWLRPRGRAARASP. The chain crosses the membrane as a helical span at residues 55 to 74; it reads LLFLLLVPSPRLAATATATA. Topologically, residues 75 to 316 are mitochondrial matrix; sequence PRRTLAERSR…KTMLEAHKLD (242 aa). The stretch at 197–291 forms a coiled coil; the sequence is ALQQVLSKIA…VSLHAQQDRA (95 aa). K204 carries the post-translational modification N6-acetyllysine. The helical transmembrane segment at 317-339 threads the bilayer; the sequence is TIKYLAGSVFTCLTVALGFYRLW. Residue I340 is a topological domain, mitochondrial intermembrane.

The protein belongs to the CCDC90 family. Interacts (via coiled coil regions) with MCU; the interaction is direct. Interacts with SMDT1/EMRE; the interaction is direct. Interacts with PPIF.

It is found in the mitochondrion inner membrane. In terms of biological role, key regulator of mitochondrial calcium uniporter (MCU) required for calcium entry into mitochondrion. Plays a direct role in uniporter-mediated calcium uptake via a direct interaction with MCU. Probably involved in the assembly of the membrane components of the uniporter complex (uniplex). In Mus musculus (Mouse), this protein is Mitochondrial calcium uniporter regulator 1.